A 753-amino-acid polypeptide reads, in one-letter code: 5-methyltetrahydropteroyltriglutamate--homocysteine methyltransferase (753 aa).

Residues 17–20 (RELK) and K117 each bind 5-methyltetrahydropteroyltri-L-glutamate. L-homocysteine-binding positions include 431-433 (IGS) and E484. Residues 431–433 (IGS) and E484 contribute to the L-methionine site. 5-methyltetrahydropteroyltri-L-glutamate contacts are provided by residues 515–516 (RC) and W561. L-homocysteine is bound at residue D599. D599 serves as a coordination point for L-methionine. Residue E605 participates in 5-methyltetrahydropteroyltri-L-glutamate binding. The Zn(2+) site is built by H641, C643, and E665. The active-site Proton donor is H694. C726 contacts Zn(2+).

This sequence belongs to the vitamin-B12 independent methionine synthase family. Zn(2+) serves as cofactor.

It catalyses the reaction 5-methyltetrahydropteroyltri-L-glutamate + L-homocysteine = tetrahydropteroyltri-L-glutamate + L-methionine. It participates in amino-acid biosynthesis; L-methionine biosynthesis via de novo pathway; L-methionine from L-homocysteine (MetE route): step 1/1. Functionally, catalyzes the transfer of a methyl group from 5-methyltetrahydrofolate to homocysteine resulting in methionine formation. This Enterobacter sp. (strain 638) protein is 5-methyltetrahydropteroyltriglutamate--homocysteine methyltransferase.